We begin with the raw amino-acid sequence, 315 residues long: Ornithine carbamoyltransferase (315 aa).

Residues 53-56 (STRT), Gln80, Arg104, and 131-134 (HPCQ) contribute to the carbamoyl phosphate site. L-ornithine-binding positions include Asn163, Asp227, and 231 to 232 (SM). Carbamoyl phosphate is bound by residues 267–268 (CL) and Arg295.

This sequence belongs to the aspartate/ornithine carbamoyltransferase superfamily. OTCase family.

It is found in the cytoplasm. It carries out the reaction carbamoyl phosphate + L-ornithine = L-citrulline + phosphate + H(+). It functions in the pathway amino-acid biosynthesis; L-arginine biosynthesis; L-arginine from L-ornithine and carbamoyl phosphate: step 1/3. Its function is as follows. Reversibly catalyzes the transfer of the carbamoyl group from carbamoyl phosphate (CP) to the N(epsilon) atom of ornithine (ORN) to produce L-citrulline. The polypeptide is Ornithine carbamoyltransferase (Rhodococcus jostii (strain RHA1)).